A 702-amino-acid chain; its full sequence is Elongation factor G (702 aa).

Positions 8–290 (ERYRNIGISA…AVIDYLPSPV (283 aa)) constitute a tr-type G domain. Residues 17–24 (AHIDAGKT), 88–92 (DTPGH), and 142–145 (NKMD) contribute to the GTP site.

Belongs to the TRAFAC class translation factor GTPase superfamily. Classic translation factor GTPase family. EF-G/EF-2 subfamily.

It localises to the cytoplasm. Functionally, catalyzes the GTP-dependent ribosomal translocation step during translation elongation. During this step, the ribosome changes from the pre-translocational (PRE) to the post-translocational (POST) state as the newly formed A-site-bound peptidyl-tRNA and P-site-bound deacylated tRNA move to the P and E sites, respectively. Catalyzes the coordinated movement of the two tRNA molecules, the mRNA and conformational changes in the ribosome. The chain is Elongation factor G from Acidovorax sp. (strain JS42).